We begin with the raw amino-acid sequence, 260 residues long: UPF0246 protein BceJ2315_22780 (260 aa).

Belongs to the UPF0246 family.

In Burkholderia cenocepacia (strain ATCC BAA-245 / DSM 16553 / LMG 16656 / NCTC 13227 / J2315 / CF5610) (Burkholderia cepacia (strain J2315)), this protein is UPF0246 protein BceJ2315_22780.